The sequence spans 527 residues: Cytokinin dehydrogenase 3 (527 aa).

A signal peptide spans M1 to P22. One can recognise an FAD-binding PCMH-type domain in the interval L52 to A231. Residues A87, G89, and G91 each contribute to the FAD site. H92 carries the pros-8alpha-FAD histidine modification. 7 residues coordinate FAD: S93, Q97, D155, T160, S166, I170, and I221. N-linked (GlcNAc...) asparagine glycosylation occurs at N413. FAD is bound by residues Y471 and Q509.

This sequence belongs to the oxygen-dependent FAD-linked oxidoreductase family. Monomer. Requires FAD as cofactor. As to expression, expressed in inflorescence meristems. Highly expressed in lamina joints, and mainly in the parenchyma cells and vascular bundles on the abaxial side of the lamina joint. Expressed in roots, stems, leaves and young panicles.

It is found in the endoplasmic reticulum. The catalysed reaction is N(6)-dimethylallyladenine + A + H2O = 3-methyl-2-butenal + adenine + AH2. Functionally, catalyzes the oxidation of cytokinins, a family of N(6)-substituted adenine derivatives, where the substituent is an isopentenyl group. Cytokinins are plant hormones essential for plant growth, development, and stress responses. Exhibits specific activities toward trans-zeatin (tZ) and isopentenyladenine (iP). Plays a role in lamina joint inclination. Regulates cell proliferation and vascular bundle number on the abaxial side of lamina joint. In Oryza sativa subsp. japonica (Rice), this protein is Cytokinin dehydrogenase 3.